The primary structure comprises 232 residues: Clarin-1 (232 aa).

The chain crosses the membrane as a helical span at residues 8–28; the sequence is IIFCMAGVFSFACALGVVTAL. Asparagine 48 carries N-linked (GlcNAc...) asparagine glycosylation. Transmembrane regions (helical) follow at residues 101–121 and 135–155; these read IILF…FFMY and LGLY…MILF. The N-linked (GlcNAc...) asparagine glycan is linked to asparagine 184. A helical membrane pass occupies residues 186 to 206; the sequence is TTSFWVVFICFFVHFLNGLLI.

The protein belongs to the clarin family.

The protein localises to the cell membrane. Its function is as follows. May have a role in the excitatory ribbon synapse junctions between hair cells and cochlear ganglion cells and presumably also in analogous synapses within the retina. This chain is Clarin-1 (Clrn1), found in Rattus norvegicus (Rat).